The chain runs to 229 residues: Thiamine-phosphate synthase (229 aa).

4-amino-2-methyl-5-(diphosphooxymethyl)pyrimidine is bound by residues 38–42 and N73; that span reads QFREK. Positions 74 and 93 each coordinate Mg(2+). S111 contributes to the 4-amino-2-methyl-5-(diphosphooxymethyl)pyrimidine binding site. 137 to 139 is a 2-[(2R,5Z)-2-carboxy-4-methylthiazol-5(2H)-ylidene]ethyl phosphate binding site; that stretch reads TLS. Position 140 (K140) interacts with 4-amino-2-methyl-5-(diphosphooxymethyl)pyrimidine. 2-[(2R,5Z)-2-carboxy-4-methylthiazol-5(2H)-ylidene]ethyl phosphate is bound by residues G169 and 189 to 190; that span reads IS.

The protein belongs to the thiamine-phosphate synthase family. Mg(2+) serves as cofactor.

The catalysed reaction is 2-[(2R,5Z)-2-carboxy-4-methylthiazol-5(2H)-ylidene]ethyl phosphate + 4-amino-2-methyl-5-(diphosphooxymethyl)pyrimidine + 2 H(+) = thiamine phosphate + CO2 + diphosphate. It carries out the reaction 2-(2-carboxy-4-methylthiazol-5-yl)ethyl phosphate + 4-amino-2-methyl-5-(diphosphooxymethyl)pyrimidine + 2 H(+) = thiamine phosphate + CO2 + diphosphate. It catalyses the reaction 4-methyl-5-(2-phosphooxyethyl)-thiazole + 4-amino-2-methyl-5-(diphosphooxymethyl)pyrimidine + H(+) = thiamine phosphate + diphosphate. Its pathway is cofactor biosynthesis; thiamine diphosphate biosynthesis; thiamine phosphate from 4-amino-2-methyl-5-diphosphomethylpyrimidine and 4-methyl-5-(2-phosphoethyl)-thiazole: step 1/1. Its function is as follows. Condenses 4-methyl-5-(beta-hydroxyethyl)thiazole monophosphate (THZ-P) and 2-methyl-4-amino-5-hydroxymethyl pyrimidine pyrophosphate (HMP-PP) to form thiamine monophosphate (TMP). The protein is Thiamine-phosphate synthase of Streptococcus suis (strain 98HAH33).